The sequence spans 1134 residues: Early transcription factor large subunit homolog (1134 aa).

Positions 52–352 (KGGRAFFPCD…PNGQPLQRQQ (301 aa)) constitute a Helicase ATP-binding domain. 99–106 (WQTGTGKS) is a binding site for ATP. The DEAH box motif lies at 281-284 (DEIH). In terms of domain architecture, Helicase C-terminal spans 524–725 (MMKDILSIIR…EGDKALRKHA (202 aa)).

Belongs to the DEAD box helicase family. DEAH subfamily.

The protein localises to the virion. It carries out the reaction ATP + H2O = ADP + phosphate + H(+). Functionally, putative initation factor. This chain is Early transcription factor large subunit homolog, found in African swine fever virus (isolate Pig/Kenya/KEN-50/1950) (ASFV).